The chain runs to 186 residues: Threonylcarbamoyl-AMP synthase (186 aa).

The region spanning 5–186 (LLTIKAAAKL…WEAQTQKRLR (182 aa)) is the YrdC-like domain.

The protein belongs to the SUA5 family. TsaC subfamily.

Its subcellular location is the cytoplasm. It catalyses the reaction L-threonine + hydrogencarbonate + ATP = L-threonylcarbamoyladenylate + diphosphate + H2O. In terms of biological role, required for the formation of a threonylcarbamoyl group on adenosine at position 37 (t(6)A37) in tRNAs that read codons beginning with adenine. Catalyzes the conversion of L-threonine, HCO(3)(-)/CO(2) and ATP to give threonylcarbamoyl-AMP (TC-AMP) as the acyladenylate intermediate, with the release of diphosphate. This is Threonylcarbamoyl-AMP synthase from Hydrogenovibrio crunogenus (strain DSM 25203 / XCL-2) (Thiomicrospira crunogena).